Consider the following 159-residue polypeptide: Putative polyketide cyclase (159 aa).

The protein to polyketide cyclases.

Involved in developmentally regulated synthesis of a compound biosynthetically related to polyketide antibiotics which is essential for spore color in Streptomyces coelicolor. In Streptomyces coelicolor (strain ATCC BAA-471 / A3(2) / M145), this protein is Putative polyketide cyclase.